Here is a 611-residue protein sequence, read N- to C-terminus: O-fucosyltransferase 8 (611 aa).

The disordered stretch occupies residues 1–29 (MGKQGSPRSPRPETIDKEEKFGRRSLDSL). The span at 10–26 (PRPETIDKEEKFGRRSL) shows a compositional bias: basic and acidic residues. A helical; Signal-anchor for type II membrane protein membrane pass occupies residues 78-98 (IVLMISVTGFIFCMDSIMVSI). Residues N115, N216, and N270 are each glycosylated (N-linked (GlcNAc...) asparagine). 386 to 388 (HLR) serves as a coordination point for substrate. N506 carries N-linked (GlcNAc...) asparagine glycosylation.

The protein belongs to the glycosyltransferase GT106 family.

The protein localises to the membrane. It functions in the pathway glycan metabolism. The sequence is that of O-fucosyltransferase 8 from Arabidopsis thaliana (Mouse-ear cress).